A 116-amino-acid chain; its full sequence is Ribonuclease P protein component (116 aa).

Belongs to the RnpA family. In terms of assembly, consists of a catalytic RNA component (M1 or rnpB) and a protein subunit.

The enzyme catalyses Endonucleolytic cleavage of RNA, removing 5'-extranucleotides from tRNA precursor.. Its function is as follows. RNaseP catalyzes the removal of the 5'-leader sequence from pre-tRNA to produce the mature 5'-terminus. It can also cleave other RNA substrates such as 4.5S RNA. The protein component plays an auxiliary but essential role in vivo by binding to the 5'-leader sequence and broadening the substrate specificity of the ribozyme. The polypeptide is Ribonuclease P protein component (Acholeplasma laidlawii (strain PG-8A)).